Consider the following 429-residue polypeptide: Glutamate-1-semialdehyde 2,1-aminomutase 2 (429 aa).

Residue Lys-268 is modified to N6-(pyridoxal phosphate)lysine.

The protein belongs to the class-III pyridoxal-phosphate-dependent aminotransferase family. HemL subfamily. Homodimer. The cofactor is pyridoxal 5'-phosphate.

It is found in the cytoplasm. The catalysed reaction is (S)-4-amino-5-oxopentanoate = 5-aminolevulinate. It participates in porphyrin-containing compound metabolism; protoporphyrin-IX biosynthesis; 5-aminolevulinate from L-glutamyl-tRNA(Glu): step 2/2. The chain is Glutamate-1-semialdehyde 2,1-aminomutase 2 from Bacillus anthracis (strain A0248).